Reading from the N-terminus, the 142-residue chain is Transcriptional regulator MraZ (142 aa).

SpoVT-AbrB domains are found at residues Ala5–Glu51 and Ala77–Thr120.

Belongs to the MraZ family. As to quaternary structure, forms oligomers.

The protein resides in the cytoplasm. Its subcellular location is the nucleoid. This Cupriavidus pinatubonensis (strain JMP 134 / LMG 1197) (Cupriavidus necator (strain JMP 134)) protein is Transcriptional regulator MraZ.